The primary structure comprises 485 residues: Aspartyl/glutamyl-tRNA(Asn/Gln) amidotransferase subunit B (485 aa).

This sequence belongs to the GatB/GatE family. GatB subfamily. In terms of assembly, heterotrimer of A, B and C subunits.

It catalyses the reaction L-glutamyl-tRNA(Gln) + L-glutamine + ATP + H2O = L-glutaminyl-tRNA(Gln) + L-glutamate + ADP + phosphate + H(+). The enzyme catalyses L-aspartyl-tRNA(Asn) + L-glutamine + ATP + H2O = L-asparaginyl-tRNA(Asn) + L-glutamate + ADP + phosphate + 2 H(+). Functionally, allows the formation of correctly charged Asn-tRNA(Asn) or Gln-tRNA(Gln) through the transamidation of misacylated Asp-tRNA(Asn) or Glu-tRNA(Gln) in organisms which lack either or both of asparaginyl-tRNA or glutaminyl-tRNA synthetases. The reaction takes place in the presence of glutamine and ATP through an activated phospho-Asp-tRNA(Asn) or phospho-Glu-tRNA(Gln). This is Aspartyl/glutamyl-tRNA(Asn/Gln) amidotransferase subunit B from Opitutus terrae (strain DSM 11246 / JCM 15787 / PB90-1).